Consider the following 122-residue polypeptide: MAPKKAPAAAAEKKVKKAPTTEKKNKKKRSETFAIYIFKVLKQVHPDVGISKKAMNIMNSFINDSFERIALESSKLVRFNKRRTLSSREVQTAVKLLLPGELARHAISEGTKAVTKFSSSTN.

Over residues 1–10 (MAPKKAPAAA) the composition is skewed to low complexity. The tract at residues 1 to 28 (MAPKKAPAAAAEKKVKKAPTTEKKNKKK) is disordered. Residue Ala-2 is modified to N,N,N-trimethylalanine. N6-acetyllysine occurs at positions 5 and 42. Lys-116 is covalently cross-linked (Glycyl lysine isopeptide (Lys-Gly) (interchain with G-Cter in ubiquitin)).

Belongs to the histone H2B family. As to quaternary structure, the nucleosome is a histone octamer containing two molecules each of H2A, H2B, H3 and H4 assembled in one H3-H4 heterotetramer and two H2A-H2B heterodimers. The octamer wraps approximately 147 bp of DNA. Acetylation occurs almost exclusively in the MAC. In terms of processing, monoubiquitination to form H2BK115ub1 gives a specific tag for epigenetic transcriptional activation and is also prerequisite for H3K4me and H3K79me formation.

The protein resides in the nucleus. It is found in the chromosome. Its function is as follows. Core component of nucleosome. Nucleosomes wrap and compact DNA into chromatin, limiting DNA accessibility to the cellular machineries which require DNA as a template. Histones thereby play a central role in transcription regulation, DNA repair, DNA replication and chromosomal stability. DNA accessibility is regulated via a complex set of post-translational modifications of histones, also called histone code, and nucleosome remodeling. This Tetrahymena thermophila (strain SB210) protein is Histone H2B.1 (HTB1).